The following is a 120-amino-acid chain: Small ribosomal subunit protein uS13 (120 aa).

The disordered stretch occupies residues 92–120 (HRKGLPVRGQTTKNNARTRKGKKKTVGSK). The segment covering 107–120 (ARTRKGKKKTVGSK) has biased composition (basic residues).

The protein belongs to the universal ribosomal protein uS13 family. As to quaternary structure, part of the 30S ribosomal subunit. Forms a loose heterodimer with protein S19. Forms two bridges to the 50S subunit in the 70S ribosome.

Functionally, located at the top of the head of the 30S subunit, it contacts several helices of the 16S rRNA. In the 70S ribosome it contacts the 23S rRNA (bridge B1a) and protein L5 of the 50S subunit (bridge B1b), connecting the 2 subunits; these bridges are implicated in subunit movement. Contacts the tRNAs in the A and P-sites. The protein is Small ribosomal subunit protein uS13 of Helicobacter hepaticus (strain ATCC 51449 / 3B1).